Consider the following 157-residue polypeptide: 2-C-methyl-D-erythritol 2,4-cyclodiphosphate synthase (157 aa).

2 residues coordinate a divalent metal cation: aspartate 8 and histidine 10. 4-CDP-2-C-methyl-D-erythritol 2-phosphate is bound by residues 8 to 10 and 34 to 35; these read DVH and HS. Histidine 42 contributes to the a divalent metal cation binding site. Residues 56–58, 132–135, and arginine 142 contribute to the 4-CDP-2-C-methyl-D-erythritol 2-phosphate site; these read DIG and TTNE.

Belongs to the IspF family. In terms of assembly, homotrimer. Requires a divalent metal cation as cofactor.

The catalysed reaction is 4-CDP-2-C-methyl-D-erythritol 2-phosphate = 2-C-methyl-D-erythritol 2,4-cyclic diphosphate + CMP. It functions in the pathway isoprenoid biosynthesis; isopentenyl diphosphate biosynthesis via DXP pathway; isopentenyl diphosphate from 1-deoxy-D-xylulose 5-phosphate: step 4/6. In terms of biological role, involved in the biosynthesis of isopentenyl diphosphate (IPP) and dimethylallyl diphosphate (DMAPP), two major building blocks of isoprenoid compounds. Catalyzes the conversion of 4-diphosphocytidyl-2-C-methyl-D-erythritol 2-phosphate (CDP-ME2P) to 2-C-methyl-D-erythritol 2,4-cyclodiphosphate (ME-CPP) with a corresponding release of cytidine 5-monophosphate (CMP). The polypeptide is 2-C-methyl-D-erythritol 2,4-cyclodiphosphate synthase (Chlorobaculum tepidum (strain ATCC 49652 / DSM 12025 / NBRC 103806 / TLS) (Chlorobium tepidum)).